A 365-amino-acid polypeptide reads, in one-letter code: uncharacterized protein (365 aa).

ATP is bound at residue 29–36 (GPLNSGKS).

It belongs to the archaeal ATPase family.

This is an uncharacterized protein from Methanocaldococcus jannaschii (strain ATCC 43067 / DSM 2661 / JAL-1 / JCM 10045 / NBRC 100440) (Methanococcus jannaschii).